Here is a 133-residue protein sequence, read N- to C-terminus: Glycine cleavage system H protein (133 aa).

A Lipoyl-binding domain is found at 30 to 112 (TITVGITHHA…YGAGWFFKIK (83 aa)). Position 71 is an N6-lipoyllysine (Lys71).

This sequence belongs to the GcvH family. In terms of assembly, the glycine cleavage system is composed of four proteins: P, T, L and H. The cofactor is (R)-lipoate.

Its function is as follows. The glycine cleavage system catalyzes the degradation of glycine. The H protein shuttles the methylamine group of glycine from the P protein to the T protein. In Neisseria gonorrhoeae (strain ATCC 700825 / FA 1090), this protein is Glycine cleavage system H protein.